Here is a 119-residue protein sequence, read N- to C-terminus: Large ribosomal subunit protein uL18 (119 aa).

A disordered region spans residues 1-23; that stretch reads MISKPDKNKTRQRRHARVRGKIS. Residues 10 to 20 are compositionally biased toward basic residues; that stretch reads TRQRRHARVRG.

This sequence belongs to the universal ribosomal protein uL18 family. In terms of assembly, part of the 50S ribosomal subunit; part of the 5S rRNA/L5/L18/L25 subcomplex. Contacts the 5S and 23S rRNAs.

Its function is as follows. This is one of the proteins that bind and probably mediate the attachment of the 5S RNA into the large ribosomal subunit, where it forms part of the central protuberance. The polypeptide is Large ribosomal subunit protein uL18 (Lacticaseibacillus casei (strain BL23) (Lactobacillus casei)).